Here is a 207-residue protein sequence, read N- to C-terminus: Transcription factor DYT1 (207 aa).

Positions 1-38 (MGGGSRFQEPVRMSRRKQVTKEKEEDENFKSPNLEAER) are disordered. In terms of domain architecture, bHLH spans 28 to 77 (NFKSPNLEAERRRREKLHCRLMALRSHVPIVTNMTKASIVEDAITYIGEL).

In terms of assembly, homodimer. As to expression, mostly expressed in anthers, and, to a lower extent, in young inflorescences undergoing meiosis and siliques.

The protein resides in the nucleus. Transcription factor. Involved in the control of tapetum development. Required for male fertility and pollen differentiation, especially during callose deposition. This chain is Transcription factor DYT1, found in Arabidopsis thaliana (Mouse-ear cress).